A 216-amino-acid polypeptide reads, in one-letter code: Transmembrane protein 186 (216 aa).

Residues 1–68 are Mitochondrial matrix-facing; that stretch reads MAFLLRAVPR…IYRFNAIRAL (68 aa). Residues 69–91 form a helical membrane-spanning segment; it reads GFLSRLKLAQTAVTVVALPPGFY. Over 92-103 the chain is Mitochondrial intermembrane; the sequence is CYSQGLMTLSSL. Residues 104–124 form a helical membrane-spanning segment; the sequence is GLMSGIASFALVMLCWMSHFF. Residues 125–216 lie on the Mitochondrial matrix side of the membrane; sequence RRLVGILYVN…GTLATLKNSK (92 aa).

Belongs to the TMEM186 family. As to quaternary structure, part of the mitochondrial complex I assembly/MCIA complex that comprises at least the core subunits TMEM126B, NDUFAF1, ECSIT and ACAD9 and complement subunits such as COA1 and TMEM186. Interacts with MT-ND3.

It is found in the mitochondrion inner membrane. Its function is as follows. As part of the MCIA complex, required for efficient assembly of the mitochondrial complex I. This Rattus norvegicus (Rat) protein is Transmembrane protein 186.